We begin with the raw amino-acid sequence, 317 residues long: MEEDCEFRHWDELIPDALGLIFSHLPLQEVLTVVPRVCKAWNRAVTGPYCWQEIDIELWSNRFHQSDHLDRMLEMLIPRSAGSLRKLSVTGLRNDSIFSFIAQHAGSLKTLKVPRSGLTNSGVVNVAEKLSSLTFLDLSYCCKIGPEAIQAIGKHCKSLREFCRNMHPLDVASVVSHDDEAYAIANTMPKLKRLEIAYHRVSTEGVLKILSCCVFLEFLELRGCWDVQLDNKFFKEKFPDMKVLGPRVIGFYDMINDWEDCCSDYFSDGSDYLAWEFFEDGVMGEFYEDEFEHGWDDNFYAENAVLDMEPHIWPPSP.

The 48-residue stretch at 7-54 (FRHWDELIPDALGLIFSHLPLQEVLTVVPRVCKAWNRAVTGPYCWQEI) folds into the F-box domain.

In terms of assembly, part of a SCF (SKP1-cullin-F-box) protein ligase complex. Interacts with CUL1, CUL2 and SPK1B/ASK2.

The protein localises to the nucleus. The protein operates within protein modification; protein ubiquitination. In terms of biological role, component of SCF(ASK-cullin-F-box) E3 ubiquitin ligase complexes, which may mediate the ubiquitination and subsequent proteasomal degradation of target proteins. This is F-box protein FBW2 (FBW2) from Arabidopsis thaliana (Mouse-ear cress).